The sequence spans 296 residues: Enoyl-CoA hydratase ACTT3 (296 aa).

The Peroxisomal targeting signal type 1 motif lies at 294–296 (PKL).

This sequence belongs to the enoyl-CoA hydratase/isomerase family.

It is found in the peroxisome. The catalysed reaction is a (3S)-3-hydroxyacyl-CoA = a (2E)-enoyl-CoA + H2O. It catalyses the reaction a 4-saturated-(3S)-3-hydroxyacyl-CoA = a (3E)-enoyl-CoA + H2O. The protein operates within mycotoxin biosynthesis. Enoyl-CoA hydratase; part of the gene clusters that mediate the biosynthesis of the host-selective toxins (HSTs) ACT-toxins responsible for brown spot of tangerine disease by the tangerine pathotype which affects tangerines and mandarins. ACT-toxins consist of three moieties, 9,10-epoxy-8-hydroxy-9-methyl-decatrienoic acid (EDA), valine and a polyketide. ACT-toxin I is toxic to both citrus and pear; toxin II the 5''-deoxy derivative of ACT-toxin I, is highly toxic to pear and slightly toxic to citrus. On cellular level, ACT-toxins affect plasma membrane of susceptible cells and cause a sudden increase in loss of K(+) after a few minutes of toxin treatment. The acyl-CoA ligase ACTT1, the hydrolase ACTT2, the enoyl-CoA hydratases ACTT3 and ACTT6, and the acyl-CoA synthetase ACTT5 are all involved in the biosynthesis of the AK-, AF- and ACT-toxin common 9,10-epoxy-8-hydroxy-9-methyl-decatrienoic acid (EDA) structural moiety. The exact role of each enzyme, and of additional enzymes identified within the AF-toxin clusters have still to be determined. On the other hand, ACTTS1 to ACTTS4 are specific to the tangerine pathotype. The function of ACTTS3 is to elongate the polyketide chain portion of ACT-toxin that is unique to this toxin. The enoyl-reductase ACTTS2 might complement the missing enoyl-reductase (ER) domain in ACTTS3 in the synthesis of the polyketide portion of ACT-toxin. The roles of the nonribosomal peptide synthetases-related proteins ACTTS1 and ACTTS4 have also still not been elucidated. The chain is Enoyl-CoA hydratase ACTT3 from Alternaria alternata (Alternaria rot fungus).